Consider the following 351-residue polypeptide: 2-Hydroxyacid oxidase 2 (351 aa).

One can recognise an FMN hydroxy acid dehydrogenase domain in the interval 2 to 351 (SLVCLTDFQA…NRNLVQFSRL (350 aa)). FMN-binding positions include 77–79 (PTG), serine 106, and glutamine 128. Tyrosine 130 is an a 2-oxocarboxylate binding site. Threonine 156 contacts FMN. An a 2-oxocarboxylate-binding site is contributed by arginine 165. Position 178 is a phosphothreonine (threonine 178). An FMN-binding site is contributed by lysine 222. Residue histidine 246 is the Proton acceptor of the active site. Residue arginine 249 participates in a 2-oxocarboxylate binding. FMN contacts are provided by residues 277–281 (DGGVR) and 300–301 (GR). Positions 349–351 (SRL) match the Microbody targeting signal motif.

Belongs to the FMN-dependent alpha-hydroxy acid dehydrogenase family. As to quaternary structure, homotetramer. FMN is required as a cofactor. In terms of tissue distribution, expressed in the liver and kidney.

It is found in the peroxisome. The catalysed reaction is a (2S)-2-hydroxycarboxylate + O2 = a 2-oxocarboxylate + H2O2. It catalyses the reaction 2-hydroxyhexadecanoate + O2 = 2-oxohexadecanoate + H2O2. It carries out the reaction 2-hydroxyoctanoate + O2 = 2-oxooctanoate + H2O2. Its pathway is lipid metabolism; fatty acid metabolism. Oxidase that catalyzes the oxidation of medium and long chain hydroxyacids such as 2-hydroxyhexadecanoate and 2-hydroxyoctanoate, to the correspondong 2-oxoacids. Its role in the oxidation of 2-hydroxy fatty acids may contribute to the general pathway of fatty acid alpha-oxidation. Active in vitro with the artificial electron acceptor 2,6-dichlorophenolindophenol (DCIP), but O2 is believed to be the physiological electron acceptor, leading to the production of H2O2. Is not active on glycolate, glyoxylate, L-lactate and 2-hydroxybutanoate. The sequence is that of 2-Hydroxyacid oxidase 2 (HAO2) from Homo sapiens (Human).